A 274-amino-acid chain; its full sequence is 2,3,4,5-tetrahydropyridine-2,6-dicarboxylate N-succinyltransferase (274 aa).

Substrate contacts are provided by arginine 106 and aspartate 143.

Belongs to the transferase hexapeptide repeat family. Homotrimer.

The protein localises to the cytoplasm. It carries out the reaction (S)-2,3,4,5-tetrahydrodipicolinate + succinyl-CoA + H2O = (S)-2-succinylamino-6-oxoheptanedioate + CoA. It functions in the pathway amino-acid biosynthesis; L-lysine biosynthesis via DAP pathway; LL-2,6-diaminopimelate from (S)-tetrahydrodipicolinate (succinylase route): step 1/3. The sequence is that of 2,3,4,5-tetrahydropyridine-2,6-dicarboxylate N-succinyltransferase from Rickettsia akari (strain Hartford).